Here is a 205-residue protein sequence, read N- to C-terminus: Basigin (205 aa).

The first 18 residues, 1–18 (MAAALFVLLGFALLGTHG), serve as a signal peptide directing secretion. In terms of domain architecture, Ig-like C2-type spans 19 to 103 (ASGAAGTVFT…MGTANIQLHG (85 aa)). Topologically, residues 19-205 (ASGAAGTVFT…AIITLRVRSH (187 aa)) are extracellular. Disulfide bonds link Cys41-Cys87 and Cys126-Cys185. Asn44, Asn152, and Asn186 each carry an N-linked (GlcNAc...) asparagine glycan. The 95-residue stretch at 105–199 (PRVKAVKSSE…SKGSDQAIIT (95 aa)) folds into the Ig-like V-type domain.

Homooligomer. Interacts with VEGFA, KDR/VEGFR2, PPIA/CYPA, SLC16A12, SLC16A11, ATP1B2, MAG, L1CAM and AJAP1. Interacts with SLC16A1; interaction mediates SLC16A1 targeting to the plasma membrane. Interacts with SLC16A3; interaction mediates SLC16A3 targeting to the plasma membrane. Interacts with PPIL2; regulates BSG transport to the cell membrane. Interacts with XKR8; promoting its localization at the cell membrane. Interacts with SLC16A6; this interaction mediates targeting to the plasma membrane.

Its subcellular location is the cell membrane. The protein localises to the endoplasmic reticulum membrane. It is found in the basolateral cell membrane. In terms of biological role, signaling receptor for cyclophilins, essential for PPIA/CYPA and PPIB/CYPB-dependent signaling related to chemotaxis and adhesion of immune cells. Plays an important role in targeting the monocarboxylate transporters SLC16A1/GLUT1, SLC16A3, SLC16A8, SLC16A11 and SLC16A12 to the plasma membrane. Acts as a coreceptor for vascular endothelial growth factor receptor 2 (KDR/VEGFR2) in endothelial cells enhancing its VEGFA-mediated activation and downstream signaling. Promotes angiogenesis through EPAS1/HIF2A-mediated up-regulation of VEGFA and KDR/VEGFR2 in endothelial cells. In Bos taurus (Bovine), this protein is Basigin (BSG).